The primary structure comprises 624 residues: APC membrane recruitment protein 2 (624 aa).

2 disordered regions span residues 1-308 and 342-596; these read MDSH…PPSE and EDVG…IPVS. Residues 74–91 show a composition bias toward basic and acidic residues; sequence SGKKEDAGGGEAQGKDAP. Residues 101–111 are compositionally biased toward low complexity; sequence SASSSVAKSHS. 2 stretches are compositionally biased toward basic and acidic residues: residues 120–132 and 247–258; these read GRPENGKAAENAE and RRLEELCGERPD. 2 stretches are compositionally biased toward low complexity: residues 272-282 and 295-307; these read ITGDIPITTIP and AAAPDPSSVDPPS. Positions 406 to 416 are enriched in gly residues; sequence TGGGGGGGGGT. Positions 450 to 464 are enriched in basic and acidic residues; it reads NNKEEQKGREKEQHE. Polar residues predominate over residues 535 to 549; that stretch reads PITTTCSLKTPSSTV.

Belongs to the Amer family.

The protein resides in the cell membrane. Its function is as follows. Negative regulator of the canonical Wnt signaling pathway involved in neuroectodermal patterning. Acts by specifically binding phosphatidylinositol 4,5-bisphosphate (PtdIns(4,5)P2), translocating to the cell membrane and interacting with key regulators of the canonical Wnt signaling pathway, such as components of the beta-catenin destruction complex. This chain is APC membrane recruitment protein 2 (AMER2), found in Gallus gallus (Chicken).